Consider the following 335-residue polypeptide: Methionine import ATP-binding protein MetN (335 aa).

The 240-residue stretch at 2-241 (IQFQRLHKSY…PKHATTRRFV (240 aa)) folds into the ABC transporter domain. 38 to 45 (GHSGAGKS) is a binding site for ATP.

The protein belongs to the ABC transporter superfamily. Methionine importer (TC 3.A.1.24) family. As to quaternary structure, the complex is composed of two ATP-binding proteins (MetN), two transmembrane proteins (MetI) and a solute-binding protein (MetQ).

It localises to the cell inner membrane. The catalysed reaction is L-methionine(out) + ATP + H2O = L-methionine(in) + ADP + phosphate + H(+). It carries out the reaction D-methionine(out) + ATP + H2O = D-methionine(in) + ADP + phosphate + H(+). Part of the ABC transporter complex MetNIQ involved in methionine import. Responsible for energy coupling to the transport system. The chain is Methionine import ATP-binding protein MetN from Xanthomonas axonopodis pv. citri (strain 306).